The chain runs to 329 residues: Biotin synthase (329 aa).

In terms of domain architecture, Radical SAM core spans 48–278 (FLGNGVDLCS…TKKIAVCGGR (231 aa)). Positions 66, 70, and 73 each coordinate [4Fe-4S] cluster. 2 residues coordinate [2Fe-2S] cluster: Ser-143 and Cys-203.

This sequence belongs to the radical SAM superfamily. Biotin synthase family. As to quaternary structure, homodimer. [4Fe-4S] cluster serves as cofactor. [2Fe-2S] cluster is required as a cofactor.

The catalysed reaction is (4R,5S)-dethiobiotin + (sulfur carrier)-SH + 2 reduced [2Fe-2S]-[ferredoxin] + 2 S-adenosyl-L-methionine = (sulfur carrier)-H + biotin + 2 5'-deoxyadenosine + 2 L-methionine + 2 oxidized [2Fe-2S]-[ferredoxin]. Its pathway is cofactor biosynthesis; biotin biosynthesis; biotin from 7,8-diaminononanoate: step 2/2. In terms of biological role, catalyzes the conversion of dethiobiotin (DTB) to biotin by the insertion of a sulfur atom into dethiobiotin via a radical-based mechanism. This is Biotin synthase from Geobacter metallireducens (strain ATCC 53774 / DSM 7210 / GS-15).